A 1745-amino-acid chain; its full sequence is ADAMTS-like protein 1 (1745 aa).

The signal sequence occupies residues 1–28 (MECCRRAAPGTPLLVLAFLLLSSRTARS). Residues 33-82 (EGLWDAWGPWSECSRTCGGGASYSLRRCLSSKSCEGRNIRYRTCSNVDCP) form the TSP type-1 1 domain. 3 disulfides stabilise this stretch: Cys-45–Cys-76, Cys-49–Cys-81, and Cys-60–Cys-66. Residue Asn-251 is glycosylated (N-linked (GlcNAc...) asparagine). O-linked (Fuc...) serine glycans are attached at residues Ser-310 and Ser-391. TSP type-1 domains are found at residues 376-424 (PLPR…MYTP), 436-493 (DCPK…TPCY), 522-584 (EEPS…GPCN), 607-667 (ELYD…DPCP), 703-762 (CPPA…KKDD), and 763-825 (CPSE…ATCA). Residue Thr-451 is glycosylated (O-linked (Fuc...) threonine). Disulfide bonds link Cys-534–Cys-578, Cys-538–Cys-583, and Cys-549–Cys-567. 4 disulfides stabilise this stretch: Cys-775–Cys-819, Cys-779–Cys-824, Cys-790–Cys-807, and Cys-874–Cys-922. Residues 836–938 (PHIAAARNIY…EQFVIKLIGG (103 aa)) enclose the Ig-like C2-type 1 domain. 2 disordered regions span residues 966 to 991 (EALQ…GLTA) and 1114 to 1137 (VSGF…RPHR). Positions 1115–1126 (SGFSSSLRSSSG) are enriched in low complexity. Ig-like C2-type domains are found at residues 1139–1241 (PAIL…IAVT), 1261–1352 (PTVT…TQLL), and 1378–1468 (PSVL…ASLV). 3 disulfide bridges follow: Cys-1177–Cys-1225, Cys-1283–Cys-1336, and Cys-1401–Cys-1452. 2 consecutive TSP type-1 domains span residues 1528–1591 (CPSR…QLCV) and 1649–1709 (CSVH…TPCE). Residues 1709-1745 (ENTECRDTTRYCEKVRQLKLCQLGQFRSRCCGTCGKA) form the PLAC domain.

Monomer. Post-translationally, glycosylated. O-fucosylated by POFUT2 on a serine or a threonine residue found within the consensus sequence C1-X(2)-(S/T)-C2-G of the TSP type-1 repeat domains where C1 and C2 are the first and second cysteine residue of the repeat, respectively. Fucosylated repeats can then be further glycosylated by the addition of a beta-1,3-glucose residue by the glucosyltransferase, B3GALTL. Fucosylation mediates the efficient secretion of ADAMTS family members. Can also be C-glycosylated with one or two mannose molecules on tryptophan residues within the consensus sequence W-X-X-W of the TPRs, and N-glycosylated. These other glycosylations can also facilitate secretion. Disulfide bonds are present.

Its subcellular location is the secreted. The protein localises to the extracellular space. It is found in the extracellular matrix. The polypeptide is ADAMTS-like protein 1 (Adamtsl1) (Mus musculus (Mouse)).